The primary structure comprises 313 residues: Ribosomal protein L11 methyltransferase (313 aa).

S-adenosyl-L-methionine contacts are provided by threonine 161, glycine 182, aspartate 204, and asparagine 246.

It belongs to the methyltransferase superfamily. PrmA family.

The protein localises to the cytoplasm. It carries out the reaction L-lysyl-[protein] + 3 S-adenosyl-L-methionine = N(6),N(6),N(6)-trimethyl-L-lysyl-[protein] + 3 S-adenosyl-L-homocysteine + 3 H(+). Methylates ribosomal protein L11. This chain is Ribosomal protein L11 methyltransferase, found in Acetivibrio thermocellus (strain ATCC 27405 / DSM 1237 / JCM 9322 / NBRC 103400 / NCIMB 10682 / NRRL B-4536 / VPI 7372) (Clostridium thermocellum).